The chain runs to 457 residues: Adenylosuccinate synthetase isozyme 1 (457 aa).

The tract at residues 1-24 (MSGTRASNDRPPGTGGVKRGRLQQ) is disordered. Residues 42–48 (GDEGKGK) and 70–72 (GHT) contribute to the GTP site. Asp-43 functions as the Proton acceptor in the catalytic mechanism. The Mg(2+) site is built by Asp-43 and Gly-70. Asp-43 lines the substrate pocket. Residues 43–46 (DEGK), 68–71 (NAGH), Thr-163, Arg-177, Asn-256, Thr-271, and Arg-335 contribute to the IMP site. Residue His-71 is the Proton donor of the active site. 331 to 337 (VTTGRKR) lines the substrate pocket. Residues Arg-337, 363–365 (KLD), and 445–448 (GVGK) contribute to the GTP site.

This sequence belongs to the adenylosuccinate synthetase family. Homodimer. Mg(2+) is required as a cofactor. As to expression, high levels in muscle.

It localises to the cytoplasm. It is found in the membrane. It carries out the reaction IMP + L-aspartate + GTP = N(6)-(1,2-dicarboxyethyl)-AMP + GDP + phosphate + 2 H(+). Its pathway is purine metabolism; AMP biosynthesis via de novo pathway; AMP from IMP: step 1/2. With respect to regulation, weakly inhibited by AMP non-competitively to all substrates. Inhibited by IMP non-competitively with respect to GTP. Inhibited by fructose 1,6-bisphosphate competitively with respect to IMP. Component of the purine nucleotide cycle (PNC), which interconverts IMP and AMP to regulate the nucleotide levels in various tissues, and which contributes to glycolysis and ammoniagenesis. Catalyzes the first committed step in the biosynthesis of AMP from IMP. The polypeptide is Adenylosuccinate synthetase isozyme 1 (Adss1) (Mus musculus (Mouse)).